The sequence spans 138 residues: Large ribosomal subunit protein uL16 (138 aa).

Residues 1–19 show a composition bias toward basic residues; sequence MLIPRKVKHRKQHHPKKKG. A disordered region spans residues 1–24; it reads MLIPRKVKHRKQHHPKKKGTASGG.

This sequence belongs to the universal ribosomal protein uL16 family. In terms of assembly, part of the 50S ribosomal subunit.

In terms of biological role, binds 23S rRNA and is also seen to make contacts with the A and possibly P site tRNAs. The chain is Large ribosomal subunit protein uL16 from Mycobacteroides abscessus (strain ATCC 19977 / DSM 44196 / CCUG 20993 / CIP 104536 / JCM 13569 / NCTC 13031 / TMC 1543 / L948) (Mycobacterium abscessus).